The chain runs to 139 residues: Transcription antitermination protein NusB (139 aa).

The protein belongs to the NusB family.

In terms of biological role, involved in transcription antitermination. Required for transcription of ribosomal RNA (rRNA) genes. Binds specifically to the boxA antiterminator sequence of the ribosomal RNA (rrn) operons. This Erwinia tasmaniensis (strain DSM 17950 / CFBP 7177 / CIP 109463 / NCPPB 4357 / Et1/99) protein is Transcription antitermination protein NusB.